We begin with the raw amino-acid sequence, 164 residues long: Transcription elongation factor GreA (164 aa).

Positions 11-76 form a coiled coil; sequence EESYDRLKAE…LQELLNNAKV (66 aa).

This sequence belongs to the GreA/GreB family.

In terms of biological role, necessary for efficient RNA polymerase transcription elongation past template-encoded arresting sites. The arresting sites in DNA have the property of trapping a certain fraction of elongating RNA polymerases that pass through, resulting in locked ternary complexes. Cleavage of the nascent transcript by cleavage factors such as GreA or GreB allows the resumption of elongation from the new 3'terminus. GreA releases sequences of 2 to 3 nucleotides. The protein is Transcription elongation factor GreA of Mycolicibacterium vanbaalenii (strain DSM 7251 / JCM 13017 / BCRC 16820 / KCTC 9966 / NRRL B-24157 / PYR-1) (Mycobacterium vanbaalenii).